Here is a 256-residue protein sequence, read N- to C-terminus: Ribosomal RNA small subunit methyltransferase J (256 aa).

S-adenosyl-L-methionine is bound by residues 104-105 (RD), 120-121 (ER), 156-157 (SS), and Asp-174.

Belongs to the methyltransferase superfamily. RsmJ family.

It localises to the cytoplasm. It carries out the reaction guanosine(1516) in 16S rRNA + S-adenosyl-L-methionine = N(2)-methylguanosine(1516) in 16S rRNA + S-adenosyl-L-homocysteine + H(+). Its function is as follows. Specifically methylates the guanosine in position 1516 of 16S rRNA. In Yersinia pseudotuberculosis serotype O:1b (strain IP 31758), this protein is Ribosomal RNA small subunit methyltransferase J.